A 555-amino-acid chain; its full sequence is Undecaprenyl phosphate-alpha-4-amino-4-deoxy-L-arabinose arabinosyl transferase (555 aa).

11 helical membrane passes run 6–26, 87–107, 116–136, 178–198, 206–226, 257–277, 293–313, 315–335, 351–371, 384–404, and 411–431; these read GSWA…PLNG, FGSV…AMLM, LATL…YSVL, FMTK…PIVI, LLIY…PWAL, APFW…LALL, ELFF…IAKG, LPTY…AYAE, VLNG…GSGL, PKIV…VVSV, and WSWA…AIPQ.

The protein belongs to the glycosyltransferase 83 family.

The protein localises to the cell inner membrane. It catalyses the reaction 4-amino-4-deoxy-alpha-L-arabinopyranosyl di-trans,octa-cis-undecaprenyl phosphate + lipid IVA = lipid IIA + di-trans,octa-cis-undecaprenyl phosphate.. It participates in lipopolysaccharide metabolism; 4-amino-4-deoxy-beta-L-arabinose-lipid A biosynthesis. Its function is as follows. Catalyzes the transfer of the L-Ara4N moiety of the glycolipid undecaprenyl phosphate-alpha-L-Ara4N to lipid A. The modified arabinose is attached to lipid A and is required for resistance to polymyxin and cationic antimicrobial peptides. This chain is Undecaprenyl phosphate-alpha-4-amino-4-deoxy-L-arabinose arabinosyl transferase, found in Serratia proteamaculans (strain 568).